A 317-amino-acid chain; its full sequence is Actin-related protein 2/3 complex subunit 2 (317 aa).

Belongs to the ARPC2 family. In terms of assembly, component of the Arp2/3 complex composed of arp2, act2, arc1/p41-ARC, arc2/p34-ARC, arc3/p21-ARC, arc4/p20-ARC and arc5/p16-ARC.

The protein resides in the cytoplasm. It localises to the cytoskeleton. Its subcellular location is the actin patch. Its function is as follows. Functions as actin-binding component of the Arp2/3 complex which is involved in regulation of actin polymerization and together with an activating nucleation-promoting factor (NPF) mediates the formation of branched actin networks. Seems to contact the mother actin filament. In Schizosaccharomyces pombe (strain 972 / ATCC 24843) (Fission yeast), this protein is Actin-related protein 2/3 complex subunit 2 (arc2).